The primary structure comprises 230 residues: MALVLDAEVVLLDIEGTIASQSFVLDVLFGYSRARMADFVAARRGDPEIEAILADVAARAGGTDPVAALLAWQDADQKIPPLKKLQGRIWESGYKEGAYVSHIYDDALIALRRFKAAGLPLYIFSSGSVQAQIQYFQFSSAGDLRSLFDGHFDTDIGAKVEAASYQAIADTIGARPSRIVFFSDNPRELEAAAAAGIVVVHVVKGNTPSDPRFPEITDFSTVELRHSKTE.

The protein belongs to the HAD-like hydrolase superfamily. MasA/MtnC family. As to quaternary structure, monomer. Mg(2+) is required as a cofactor.

It catalyses the reaction 5-methylsulfanyl-2,3-dioxopentyl phosphate + H2O = 1,2-dihydroxy-5-(methylsulfanyl)pent-1-en-3-one + phosphate. It functions in the pathway amino-acid biosynthesis; L-methionine biosynthesis via salvage pathway; L-methionine from S-methyl-5-thio-alpha-D-ribose 1-phosphate: step 3/6. Its pathway is amino-acid biosynthesis; L-methionine biosynthesis via salvage pathway; L-methionine from S-methyl-5-thio-alpha-D-ribose 1-phosphate: step 4/6. Functionally, bifunctional enzyme that catalyzes the enolization of 2,3-diketo-5-methylthiopentyl-1-phosphate (DK-MTP-1-P) into the intermediate 2-hydroxy-3-keto-5-methylthiopentenyl-1-phosphate (HK-MTPenyl-1-P), which is then dephosphorylated to form the acireductone 1,2-dihydroxy-3-keto-5-methylthiopentene (DHK-MTPene). The polypeptide is Enolase-phosphatase E1 (Bradyrhizobium sp. (strain BTAi1 / ATCC BAA-1182)).